The primary structure comprises 223 residues: Deoxyribose-phosphate aldolase (223 aa).

Catalysis depends on Asp91, which acts as the Proton donor/acceptor. Lys153 acts as the Schiff-base intermediate with acetaldehyde in catalysis. Lys182 (proton donor/acceptor) is an active-site residue.

This sequence belongs to the DeoC/FbaB aldolase family. DeoC type 1 subfamily.

It localises to the cytoplasm. It carries out the reaction 2-deoxy-D-ribose 5-phosphate = D-glyceraldehyde 3-phosphate + acetaldehyde. Its pathway is carbohydrate degradation; 2-deoxy-D-ribose 1-phosphate degradation; D-glyceraldehyde 3-phosphate and acetaldehyde from 2-deoxy-alpha-D-ribose 1-phosphate: step 2/2. Catalyzes a reversible aldol reaction between acetaldehyde and D-glyceraldehyde 3-phosphate to generate 2-deoxy-D-ribose 5-phosphate. This chain is Deoxyribose-phosphate aldolase, found in Yersinia pestis bv. Antiqua (strain Angola).